A 280-amino-acid chain; its full sequence is Probable endonuclease 4 (280 aa).

His-69, His-109, Glu-145, Asp-179, His-182, His-216, Asp-229, His-231, and Glu-261 together coordinate Zn(2+).

The protein belongs to the AP endonuclease 2 family. Zn(2+) is required as a cofactor.

It catalyses the reaction Endonucleolytic cleavage to 5'-phosphooligonucleotide end-products.. In terms of biological role, endonuclease IV plays a role in DNA repair. It cleaves phosphodiester bonds at apurinic or apyrimidinic (AP) sites, generating a 3'-hydroxyl group and a 5'-terminal sugar phosphate. This Erwinia tasmaniensis (strain DSM 17950 / CFBP 7177 / CIP 109463 / NCPPB 4357 / Et1/99) protein is Probable endonuclease 4.